The chain runs to 513 residues: MTTTPKPLVLMILDGFGHSESHESNAVYAAKKPVLDRLCASMPNGLISGSGMDVGLPDGQMGNSEVGHMNLGAGRVVYQDFTRVTKAIRDGEFFENPTICAAVDKAVDAGKAVHILGLLSDGGVHSHQDHLIAMAELAFKRGAEKIYLHAFLDGRDTPPKSAQSSIELLDETFKTLGKGRIASLIGRYFAMDRDNRWDRVAQAYNLIVDGQGQFNAATAQEGLQAAYAREESDEFVKATTIGEPVKVEDGDAVVFMNFRADRARELTRVFVEDDFKDFERPRQPKLAGFVMLTQYAASIPAPSAFAPGSLENVLGDYLAKNGKTQLRIAETEKYAHVTFFFSGGREEPFPGEERILIPSPKVATYDLQPEMSAPEVTDKIVDAIEHQRYDVIIVNYANGDMVGHSGVFEAAVKAVECLDLCVGRIVDALEKVGGEALITADHGNVEQMSDESTGQAHTAHTTEPVPFIYVGKRALKVREGGVLADVAPTMLKLLGLPKPAEMTGTSILVDPAH.

Residues Asp-14 and Ser-64 each contribute to the Mn(2+) site. Ser-64 serves as the catalytic Phosphoserine intermediate. Substrate is bound by residues His-125, 155-156 (RD), Arg-187, Arg-193, 259-262 (RADR), and Lys-333. 5 residues coordinate Mn(2+): Asp-400, His-404, Asp-441, His-442, and His-460.

Belongs to the BPG-independent phosphoglycerate mutase family. Monomer. It depends on Mn(2+) as a cofactor.

The catalysed reaction is (2R)-2-phosphoglycerate = (2R)-3-phosphoglycerate. The protein operates within carbohydrate degradation; glycolysis; pyruvate from D-glyceraldehyde 3-phosphate: step 3/5. Functionally, catalyzes the interconversion of 2-phosphoglycerate and 3-phosphoglycerate. In Pseudomonas fluorescens (strain ATCC BAA-477 / NRRL B-23932 / Pf-5), this protein is 2,3-bisphosphoglycerate-independent phosphoglycerate mutase.